A 279-amino-acid chain; its full sequence is NADPH-dependent 7-cyano-7-deazaguanine reductase (279 aa).

A substrate-binding site is contributed by 86 to 88 (IES). NADPH is bound at residue 88-89 (SK). C187 functions as the Thioimide intermediate in the catalytic mechanism. The Proton donor role is filled by D194. 226–227 (HE) provides a ligand contact to substrate. 255–256 (RG) serves as a coordination point for NADPH.

It belongs to the GTP cyclohydrolase I family. QueF type 2 subfamily. In terms of assembly, homodimer.

It localises to the cytoplasm. It carries out the reaction 7-aminomethyl-7-carbaguanine + 2 NADP(+) = 7-cyano-7-deazaguanine + 2 NADPH + 3 H(+). It participates in tRNA modification; tRNA-queuosine biosynthesis. In terms of biological role, catalyzes the NADPH-dependent reduction of 7-cyano-7-deazaguanine (preQ0) to 7-aminomethyl-7-deazaguanine (preQ1). The polypeptide is NADPH-dependent 7-cyano-7-deazaguanine reductase (Glaesserella parasuis serovar 5 (strain SH0165) (Haemophilus parasuis)).